The following is a 561-amino-acid chain: (+)-alpha-pinene synthase TPS2FN (561 aa).

Positions 276, 313, 317, 455, and 458 each coordinate (2E)-geranyl diphosphate. Mg(2+)-binding residues include D313 and D317. Positions 313–317 match the DDXXD motif motif; sequence DDIYD. Mg(2+) is bound by residues D458, T462, and E466.

It belongs to the terpene synthase family. Tpsb subfamily. It depends on Mg(2+) as a cofactor. Mn(2+) serves as cofactor. As to expression, expressed in glandular trichomes two to four weeks after flowering onset.

It catalyses the reaction (2E)-geranyl diphosphate = (1R,5R)-alpha-pinene + diphosphate. The catalysed reaction is (2E)-geranyl diphosphate = (4S)-limonene + diphosphate. The enzyme catalyses (2E)-geranyl diphosphate = sabinene + diphosphate. It carries out the reaction (2E)-geranyl diphosphate = beta-phellandrene + diphosphate. It catalyses the reaction (2E)-geranyl diphosphate = camphene + diphosphate. The catalysed reaction is (2E)-geranyl diphosphate = isoterpinolene + diphosphate. The protein operates within secondary metabolite biosynthesis; terpenoid biosynthesis. It functions in the pathway terpene metabolism; (-)-alpha-pinene biosynthesis; (-)-alpha-pinene from geranyl diphosphate: step 1/1. Its function is as follows. Involved in monoterpene (C10) olefins biosynthesis, constituants of cannabinoids and terpenoids-rich resins. Catalyzes mainly the conversion of (2E)-geranyl diphosphate to (+)-alpha-pinene, and also produces minor products such as camphene, sabinene, beta-phellandrene, (-)-limonene and isoterpinolene. In Cannabis sativa (Hemp), this protein is (+)-alpha-pinene synthase TPS2FN.